The chain runs to 111 residues: Cytochrome c (111 aa).

At A1 the chain carries N-acetylalanine. Positions 22, 25, and 26 each coordinate heme c. The residue at position 80 (K80) is an N6,N6,N6-trimethyllysine. M88 is a binding site for heme c. K94 is subject to N6,N6,N6-trimethyllysine.

Belongs to the cytochrome c family. Post-translationally, binds 1 heme c group covalently per subunit.

The protein localises to the mitochondrion intermembrane space. Electron carrier protein. The oxidized form of the cytochrome c heme group can accept an electron from the heme group of the cytochrome c1 subunit of cytochrome reductase. Cytochrome c then transfers this electron to the cytochrome oxidase complex, the final protein carrier in the mitochondrial electron-transport chain. This is Cytochrome c from Guizotia abyssinica (Niger).